Here is a 1546-residue protein sequence, read N- to C-terminus: Lysophospholipase NTE1 (1546 aa).

Topologically, residues 1–45 (MKDSTEALNSIAFAVDTTLSSILPSSLAPPSAPPATSSFLKSIWY) are cytoplasmic. The chain crosses the membrane as a helical span at residues 46-66 (AFWWLWSMVVFKIMNIILLYI). The Lumenal segment spans residues 67–81 (PSKIMNALSINFEIT). The chain crosses the membrane as a helical span at residues 82 to 102 (LNLSSILVALSAIITVCFLVV). Topologically, residues 103-1546 (RYKYLTGYSK…KKVLYRRNSI (1444 aa)) are cytoplasmic. A nucleoside 3',5'-cyclic phosphate contacts are provided by residues 689–820 (PTEF…LKKL) and 816–965 (KLKK…VASK). Residues 1239 to 1403 (LVLGGGGSRG…LDNLPVSEMK (165 aa)) enclose the PNPLA domain. The short motif at 1243-1248 (GGGSRG) is the GXGXXG element. The GXSXG signature appears at 1270–1274 (GTSIG). The Nucleophile role is filled by Ser1272. Asp1390 functions as the Proton acceptor in the catalytic mechanism. The short motif at 1390–1392 (DGG) is the DGA/G element.

Belongs to the NTE family.

It localises to the endoplasmic reticulum membrane. The enzyme catalyses a 1-acyl-sn-glycero-3-phosphocholine + H2O = sn-glycerol 3-phosphocholine + a fatty acid + H(+). With respect to regulation, inhibited by organophosphorus esters. Intracellular phospholipase B that catalyzes the double deacylation of phosphatidylcholine (PC) to glycerophosphocholine (GroPCho). Plays an important role in membrane lipid homeostasis. Responsible for the rapid PC turnover in response to inositol, elevated temperatures, or when choline is present in the growth medium. In Scheffersomyces stipitis (strain ATCC 58785 / CBS 6054 / NBRC 10063 / NRRL Y-11545) (Yeast), this protein is Lysophospholipase NTE1 (NTE1).